The sequence spans 380 residues: Probable cytosolic iron-sulfur protein assembly protein 1 (380 aa).

WD repeat units lie at residues 10-49, 56-108, 135-175, 182-221, 228-275, 299-338, and 346-380; these read AHND…KFPL, THKR…VEYD, GHEN…EEFE, DHSQ…DEWS, GHEG…EEDK, VHKY…KWVI, and HGVH…LWNV.

The protein belongs to the WD repeat CIA1 family. As to quaternary structure, interacts with NAR1.

The protein localises to the cytoplasm. It localises to the nucleus. Essential component of the cytosolic iron-sulfur (Fe/S) protein assembly machinery. Required for the maturation of extramitochondrial Fe/S proteins. This chain is Probable cytosolic iron-sulfur protein assembly protein 1, found in Candida dubliniensis (strain CD36 / ATCC MYA-646 / CBS 7987 / NCPF 3949 / NRRL Y-17841) (Yeast).